The primary structure comprises 248 residues: Eukaryotic translation initiation factor 6 (248 aa).

The protein belongs to the eIF-6 family. As to quaternary structure, monomer. Associates with the 60S ribosomal subunit.

It localises to the cytoplasm. It is found in the nucleus. Its subcellular location is the nucleolus. In terms of biological role, binds to the 60S ribosomal subunit and prevents its association with the 40S ribosomal subunit to form the 80S initiation complex in the cytoplasm. May also be involved in ribosome biogenesis. The polypeptide is Eukaryotic translation initiation factor 6 (Trypanosoma cruzi (strain CL Brener)).